The primary structure comprises 304 residues: Oxygen-dependent coproporphyrinogen-III oxidase (304 aa).

Ser-94 provides a ligand contact to substrate. 2 residues coordinate a divalent metal cation: His-98 and His-108. The active-site Proton donor is the His-108. Asn-110–Arg-112 is a binding site for substrate. The a divalent metal cation site is built by His-147 and His-177. The important for dimerization stretch occupies residues Tyr-242 to Arg-277. Residue Gly-260–Arg-262 coordinates substrate.

It belongs to the aerobic coproporphyrinogen-III oxidase family. As to quaternary structure, homodimer. It depends on a divalent metal cation as a cofactor.

It localises to the cytoplasm. It carries out the reaction coproporphyrinogen III + O2 + 2 H(+) = protoporphyrinogen IX + 2 CO2 + 2 H2O. It functions in the pathway porphyrin-containing compound metabolism; protoporphyrin-IX biosynthesis; protoporphyrinogen-IX from coproporphyrinogen-III (O2 route): step 1/1. Involved in the heme biosynthesis. Catalyzes the aerobic oxidative decarboxylation of propionate groups of rings A and B of coproporphyrinogen-III to yield the vinyl groups in protoporphyrinogen-IX. The polypeptide is Oxygen-dependent coproporphyrinogen-III oxidase (Methylococcus capsulatus (strain ATCC 33009 / NCIMB 11132 / Bath)).